We begin with the raw amino-acid sequence, 507 residues long: Glycerol kinase 1 (507 aa).

Position 12 (Thr-12) interacts with ADP. Thr-12, Thr-13, and Ser-14 together coordinate ATP. Thr-12 is a sn-glycerol 3-phosphate binding site. Arg-16 contributes to the ADP binding site. Sn-glycerol 3-phosphate is bound by residues Arg-82, Glu-83, Tyr-134, and Asp-249. Glycerol contacts are provided by Arg-82, Glu-83, Tyr-134, Asp-249, and Gln-250. Residues Thr-271 and Gly-315 each coordinate ADP. Residues Thr-271, Gly-315, Gln-319, and Gly-416 each coordinate ATP. ADP-binding residues include Gly-416 and Asn-420.

Belongs to the FGGY kinase family.

The catalysed reaction is glycerol + ATP = sn-glycerol 3-phosphate + ADP + H(+). The protein operates within polyol metabolism; glycerol degradation via glycerol kinase pathway; sn-glycerol 3-phosphate from glycerol: step 1/1. Its activity is regulated as follows. Inhibited by fructose 1,6-bisphosphate (FBP). Key enzyme in the regulation of glycerol uptake and metabolism. Catalyzes the phosphorylation of glycerol to yield sn-glycerol 3-phosphate. The sequence is that of Glycerol kinase 1 from Streptomyces coelicolor (strain ATCC BAA-471 / A3(2) / M145).